A 92-amino-acid polypeptide reads, in one-letter code: Large ribosomal subunit protein bL34m (92 aa).

The transit peptide at 1–46 (MAFLARCFGCQACRSVALLSGRYLQSRVWMGLPDSWPLLSLQQARG) directs the protein to the mitochondrion. Ser71 carries the phosphoserine modification.

The protein belongs to the bacterial ribosomal protein bL34 family. Component of the mitochondrial ribosome large subunit (39S) which comprises a 16S rRNA and about 50 distinct proteins.

It localises to the mitochondrion. This is Large ribosomal subunit protein bL34m (Mrpl34) from Mus musculus (Mouse).